The primary structure comprises 213 residues: NADH dehydrogenase [ubiquinone] iron-sulfur protein 7, mitochondrial (213 aa).

A mitochondrion-targeting transit peptide spans 1 to 38 (MAALSAPGLCGFRILGLRSSVGTAVQARGVHQSVATDG). The tract at residues 32 to 53 (QSVATDGPSSTQPALPKARAVA) is disordered. Residues 33-44 (SVATDGPSSTQP) show a composition bias toward polar residues. The [4Fe-4S] cluster site is built by Cys88 and Cys89. Arg111 carries the post-translational modification Hydroxyarginine. Residues Cys153 and Cys183 each contribute to the [4Fe-4S] cluster site.

This sequence belongs to the complex I 20 kDa subunit family. As to quaternary structure, core subunit of respiratory chain NADH dehydrogenase (Complex I) which is composed of 45 different subunits. This is a component of the iron-sulfur (IP) fragment of the enzyme. The cofactor is [4Fe-4S] cluster. Post-translationally, hydroxylated ar Arg-111 by NDUFAF5 early in the pathway of assembly of complex I, before the formation of the juncture between peripheral and membrane arms.

It is found in the mitochondrion inner membrane. It carries out the reaction a ubiquinone + NADH + 5 H(+)(in) = a ubiquinol + NAD(+) + 4 H(+)(out). Functionally, core subunit of the mitochondrial membrane respiratory chain NADH dehydrogenase (Complex I) which catalyzes electron transfer from NADH through the respiratory chain, using ubiquinone as an electron acceptor. Essential for the catalytic activity of complex I. In Gorilla gorilla gorilla (Western lowland gorilla), this protein is NADH dehydrogenase [ubiquinone] iron-sulfur protein 7, mitochondrial (NDUFS7).